The chain runs to 272 residues: MTKELSIGSVKMGGGRLLVLIAGPCVIESEEATLRHAERLMTICNGLGMPLIFKSSYDKANRTSINAFRGPGMDEGLRILSKVKESLGIPVLSDIHSIEQVAPAAQVLDVLQIPAFLCRQTDLVVAAAKTGKVVNVKKGQFLAPWDMRNVVGKVAASGNENIILTERGASFGYNNLVVDMRSFPVMRSYGYPVVFDATHSVQLPGGQGESSGGQREFVETLSRAAVATGIDGIFMEVHEDPSCALCDGPNSIPLAELPALLKRLQALDAVVR.

This sequence belongs to the KdsA family.

The protein resides in the cytoplasm. It carries out the reaction D-arabinose 5-phosphate + phosphoenolpyruvate + H2O = 3-deoxy-alpha-D-manno-2-octulosonate-8-phosphate + phosphate. The protein operates within carbohydrate biosynthesis; 3-deoxy-D-manno-octulosonate biosynthesis; 3-deoxy-D-manno-octulosonate from D-ribulose 5-phosphate: step 2/3. It participates in bacterial outer membrane biogenesis; lipopolysaccharide biosynthesis. The polypeptide is 2-dehydro-3-deoxyphosphooctonate aldolase (Trichlorobacter lovleyi (strain ATCC BAA-1151 / DSM 17278 / SZ) (Geobacter lovleyi)).